The following is a 241-amino-acid chain: PRA1 family protein H (241 aa).

The next 3 helical transmembrane spans lie at 142 to 162 (LFIV…VGLL), 189 to 205 (LSIG…LTFL), and 209 to 228 (MALF…HAGF).

It belongs to the PRA1 family.

It localises to the endoplasmic reticulum membrane. Functionally, may be involved in both secretory and endocytic intracellular trafficking in the endosomal/prevacuolar compartments. In Arabidopsis thaliana (Mouse-ear cress), this protein is PRA1 family protein H (PRA1H).